The primary structure comprises 78 residues: Acyl carrier protein (78 aa).

The Carrier domain occupies 2–77 (STIEERVKKI…AAIDYILSHQ (76 aa)). The residue at position 37 (Ser-37) is an O-(pantetheine 4'-phosphoryl)serine.

Belongs to the acyl carrier protein (ACP) family. Post-translationally, 4'-phosphopantetheine is transferred from CoA to a specific serine of apo-ACP by AcpS. This modification is essential for activity because fatty acids are bound in thioester linkage to the sulfhydryl of the prosthetic group.

The protein localises to the cytoplasm. Its pathway is lipid metabolism; fatty acid biosynthesis. In terms of biological role, carrier of the growing fatty acid chain in fatty acid biosynthesis. The polypeptide is Acyl carrier protein (Tolumonas auensis (strain DSM 9187 / NBRC 110442 / TA 4)).